The primary structure comprises 169 residues: Ribosomal RNA large subunit methyltransferase H (169 aa).

S-adenosyl-L-methionine is bound by residues L85, G117, and 136-141 (LGELTW).

It belongs to the RNA methyltransferase RlmH family. Homodimer.

The protein resides in the cytoplasm. It carries out the reaction pseudouridine(1915) in 23S rRNA + S-adenosyl-L-methionine = N(3)-methylpseudouridine(1915) in 23S rRNA + S-adenosyl-L-homocysteine + H(+). Its function is as follows. Specifically methylates the pseudouridine at position 1915 (m3Psi1915) in 23S rRNA. In Brucella abortus biovar 1 (strain 9-941), this protein is Ribosomal RNA large subunit methyltransferase H.